Consider the following 396-residue polypeptide: Potassium channel subfamily K member 9 (396 aa).

At 1-8 (MKRQNVRT) the chain is on the cytoplasmic side. The helical transmembrane segment at 9–29 (LSLIACTFTYLLVGAAVFDAL) threads the bilayer. Residues 30-88 (ESDHEMREEEKLKAEEVRLRGKYNISSDDYQQLELVILQSEPHRAGVQWKFAGSFYFAI) lie on the Extracellular side of the membrane. Asn-53 carries N-linked (GlcNAc...) asparagine glycosylation. Positions 89 to 101 (TVITTIGYGHAAP) form an intramembrane region, pore-forming. 4 residues coordinate K(+): Thr-93, Ile-94, Gly-95, and Tyr-96. Residues 93–98 (TIGYGH) form a selectivity filter 1 region. Residues 102–107 (GTDAGK) are Extracellular-facing. Residues 108–128 (AFCMFYAVLGIPLTLVMFQSL) form a helical membrane-spanning segment. Residues 129–158 (GERMNTFVRYLLKRIKKCCGMRNTEVSMEN) are Cytoplasmic-facing. A helical transmembrane segment spans residues 159-179 (MVTVGFFSCMGTLCLGAAAFS). The Extracellular portion of the chain corresponds to 180 to 194 (QCEDWSFFHAYYYCF). Positions 195–207 (ITLTTIGFGDFVA) form an intramembrane region, pore-forming. Residues Thr-199, Ile-200, Gly-201, and Phe-202 each coordinate K(+). A selectivity filter 2 region spans residues 199-204 (TIGFGD). Residues 208–218 (LQSKGALQRKP) lie on the Extracellular side of the membrane. The helical transmembrane segment at 219–239 (FYVAFSFMYILVGLTVIGAFL) threads the bilayer. Topologically, residues 240 to 396 (NLVVLRFLTM…HRLHIRRKSI (157 aa)) are cytoplasmic. Residues 243-248 (VLRFLT) form an X-gate region.

It belongs to the two pore domain potassium channel (TC 1.A.1.8) family. In terms of assembly, homodimer. Heterodimer with KCNK1. Heterodimer with KCNK3. In terms of tissue distribution, highly expressed in the CNS and at lower levels in the colon, kidney, liver, lung, spleen, stomach and skeletal muscle. The highest expression was found in the olfactory nuclei, piriform cortex, cerebellum, antedorsal thalmic nucleus, pontine nucleus, dorsal raphe and several nuclei in the medulla. Shows a non-homogeneous distribution in the hippocampus. Expressed at highest levels in the lateral posterior and inferior portions and at medium levels in neocortex. Expressed in motoneurons, including hypoglossal motoneurons (at protein level).

It is found in the cell membrane. It localises to the mitochondrion inner membrane. Its subcellular location is the cell projection. The protein resides in the dendrite. It carries out the reaction K(+)(in) = K(+)(out). The catalysed reaction is Na(+)(in) = Na(+)(out). Its activity is regulated as follows. Activated by halothane and isoflurane. Inhibited by external acidification, diacylglycerol, anandamide and AGT/angiotensin II. Ruthenium red inhibits homomeric but not KCNK3:KCNK9 heteromeric channels. Functionally, k(+) channel that conducts voltage-dependent outward rectifying currents upon membrane depolarization. Voltage sensing is coupled to K(+) electrochemical gradient in an 'ion flux gating' mode where outward but not inward ion flow opens the gate. Changes ion selectivity and becomes permeable to Na(+) ions in response to extracellular acidification. Protonation of the pH sensor His-98 stabilizes C-type inactivation conformation likely converting the channel from outward K(+)-conducting, to inward Na(+)-conducting to nonconductive state. Homo- and heterodimerizes to form functional channels with distinct regulatory and gating properties. Allows K(+) currents with fast-gating kinetics important for the repolarization and hyperpolarization phases of action potentials. In granule neurons, hyperpolarizes the resting membrane potential to limit intrinsic neuronal excitability, but once the action potential threshold is reached, supports high-frequency action potential firing and increased neuronal excitability. Homomeric and/or heteromeric KCNK3:KCNK9 channels operate in cerebellar granule cells, whereas heteromeric KCNK1:KCNK9 enables currents in hippocampal dentate gyrus granule neurons. Dispensable for central chemosensory respiration i.e. breathing controlled by brainstem CO2/pH, it rather conducts pH-sensitive currents and controls the firing rate of serotonergic raphe neurons involved in potentiation of the respiratory chemoreflex. In retinal ganglion cells, mediates outward rectifying currents that regulate action potentials in response to acidification of the synaptic cleft. Involved in transmission of image-forming and nonimage-forming visual information in the retina. In adrenal gland, contributes to the maintenance of a hyperpolarized resting membrane potential of aldosterone-producing cells at zona glomerulosa and limits aldosterone release as part of a regulatory mechanism that controls arterial blood pressure and electrolyte homeostasis. This is Potassium channel subfamily K member 9 from Rattus norvegicus (Rat).